The primary structure comprises 301 residues: Oxygen-dependent coproporphyrinogen-III oxidase (301 aa).

Residue Ser-90 coordinates substrate. The a divalent metal cation site is built by His-94 and His-104. The active-site Proton donor is His-104. 106–108 (NVR) lines the substrate pocket. A divalent metal cation contacts are provided by His-143 and His-173. An important for dimerization region spans residues 238–273 (YVEFNLVWDRGTLFGLQSGGRTESILMSLPPIVKWR). A substrate-binding site is contributed by 256–258 (GGR).

It belongs to the aerobic coproporphyrinogen-III oxidase family. As to quaternary structure, homodimer. The cofactor is a divalent metal cation.

It localises to the cytoplasm. It catalyses the reaction coproporphyrinogen III + O2 + 2 H(+) = protoporphyrinogen IX + 2 CO2 + 2 H2O. Its pathway is porphyrin-containing compound metabolism; protoporphyrin-IX biosynthesis; protoporphyrinogen-IX from coproporphyrinogen-III (O2 route): step 1/1. Its function is as follows. Involved in the heme biosynthesis. Catalyzes the aerobic oxidative decarboxylation of propionate groups of rings A and B of coproporphyrinogen-III to yield the vinyl groups in protoporphyrinogen-IX. The polypeptide is Oxygen-dependent coproporphyrinogen-III oxidase (Nitrosomonas eutropha (strain DSM 101675 / C91 / Nm57)).